A 645-amino-acid chain; its full sequence is Rab11 family-interacting protein 1 (645 aa).

In terms of domain architecture, C2 spans 1–128 (MSLAASAGRG…DQGRRKKQWY (128 aa)). Basic and acidic residues predominate over residues 171–187 (PFGKLKDKIKGKNKDSA). The tract at residues 171–215 (PFGKLKDKIKGKNKDSASDTASAIVPSVTPSVDSDDESFSKDKKK) is disordered. 4 positions are modified to phosphoserine: Ser186, Ser204, Ser208, and Ser236. Residues 259–296 (WDDDAHEDESSSASDVMSHKRTSSTDQQPNQSNFSLPK) form a disordered region. Polar residues predominate over residues 282–293 (STDQQPNQSNFS). Residues Ser301, Ser316, Ser340, Ser342, Ser344, Ser346, Ser357, Ser358, and Ser383 each carry the phosphoserine modification. Residues 330-545 (PEARSEIRES…PRPHPVKPMN (216 aa)) form a disordered region. 2 stretches are compositionally biased toward basic and acidic residues: residues 378–391 (SDRR…KDSM) and 418–432 (AARE…ESKK). Ser434 carries the post-translational modification Phosphoserine. The span at 459–487 (SEKEKERKGALVEAQLREEDLMRRPEKDA) shows a compositional bias: basic and acidic residues. The region spanning 573–635 (KKYQPSDPAF…EETPNILRVP (63 aa)) is the FIP-RBD domain. Residues 581–645 (AFAYAQLTHD…AQMGKKAGKM (65 aa)) form a necessary for interaction with RAB4A and RAB11A, subcellular location and endosomal recycling region.

Homooligomer. Interacts with RAB11A, RAB11B, RAB25, RAB4A and RAB14.

Its subcellular location is the recycling endosome. It is found in the cytoplasmic vesicle. A Rab11 effector protein involved in the endosomal recycling process. Also involved in controlling membrane trafficking along the phagocytic pathway and in phagocytosis. Interaction with RAB14 may function in the process of neurite formation. The chain is Rab11 family-interacting protein 1 (Rab11fip1) from Mus musculus (Mouse).